We begin with the raw amino-acid sequence, 550 residues long: Phosphatidylinositol 4-kinase gamma 2 (550 aa).

Ubiquitin-like domains follow at residues 34 to 111 and 112 to 190; these read SVLV…YDPL and LVTV…VEDT. The tract at residues 228 to 247 is disordered; sequence VDGLNKGSPPVRSAEGTGGT. Residues 234–532 enclose the PI3K/PI4K catalytic domain; it reads GSPPVRSAEG…SVLPASSEAT (299 aa). Residues 240-246 are G-loop; that stretch reads SAEGTGG. ATP-binding positions include 241–247, Lys-263, and 359–362; these read AEGTGGT and QMFM. The tract at residues 392-400 is catalytic loop; that stretch reads ANADRHAGN. Residues 415–441 are activation loop; sequence PIDHGYCLPENFEDCTFEWLYWPQAKL. Asp-417 contributes to the ATP binding site.

Belongs to the PI3/PI4-kinase family. Type II PI4K subfamily.

The protein localises to the membrane. It carries out the reaction a 1,2-diacyl-sn-glycero-3-phospho-(1D-myo-inositol) + ATP = a 1,2-diacyl-sn-glycero-3-phospho-(1D-myo-inositol 4-phosphate) + ADP + H(+). Its function is as follows. The phosphorylation of phosphatidylinositol (PI) to PI4P is the first committed step in the generation of phosphatidylinositol 4,5-bisphosphate (PIP2), a precursor of the second messenger inositol 1,4,5-trisphosphate (InsP3). In Arabidopsis thaliana (Mouse-ear cress), this protein is Phosphatidylinositol 4-kinase gamma 2 (PI4KG2).